The sequence spans 1246 residues: Zinc finger protein 687a (1246 aa).

Residues 24 to 47 (KEAIQSDTHGNHNEHSSVVGKERS) are compositionally biased toward basic and acidic residues. Residues 24-387 (KEAIQSDTHG…PTLVESASDA (364 aa)) form a disordered region. Polar residues-rich tracts occupy residues 88 to 111 (GEFSSADESQKSPQKGPSKDSSVP) and 163 to 195 (AFTNHPASTFQSLPLSNHPSVSSHLISPNFSSK). The segment covering 287-301 (SSTNPTSLTSTNNLP) has biased composition (low complexity). Residues 302–317 (VEEKDLEHIIEERDSP) show a composition bias toward basic and acidic residues. Positions 326-338 (QSRTSLPSNSQGA) are enriched in polar residues. Composition is skewed to basic and acidic residues over residues 341–350 (SKQRITREEA) and 360–375 (MQEKVDYGAEATEGKS). A C2H2-type 1 zinc finger spans residues 587–619 (YRCLECGDAFALERSLARHYDRRSMRIEVTCNH). The C2H2-type 2; degenerate zinc-finger motif lies at 696 to 719 (HSCPECWSTFKGKQELVAHFQEVE). C2H2-type zinc fingers lie at residues 817–840 (HKCPSCPMAFKSSSGAESHCASQH), 854–876 (YKCVMCRTVFTQKSLLSVHIDTH), and 885–908 (FKCPDCNKLFTQRTSLLEHVKDTH). Residues 907-953 (THRETSNHDGTSTQNSLVKMESSDGEEWGRDEEEDKGKVSDANSAVP) are disordered. Residues 914–923 (HDGTSTQNSL) show a composition bias toward polar residues. Positions 929-940 (SDGEEWGRDEEE) are enriched in acidic residues. 2 C2H2-type zinc fingers span residues 958–981 (WSCSQCQTHYTDKENYISHMTEQH) and 988–1011 (FPCTLCEGSFSSSSSLRRHIRVKH). The C2H2-type 8; degenerate zinc finger occupies 1018–1044 (FYCQLCTGEKRSFSSKLILEKHIQAQH). A disordered region spans residues 1045 to 1093 (AGERGTATQSQAVPQFTDGADSSSEHDAGVLGGSSVEPESRLAESTLTR). 2 consecutive C2H2-type zinc fingers follow at residues 1137–1160 (AQCQQCGACFASSSSLSRHLFISH) and 1210–1232 (HICKVCGRYFSKPADLNTHFRTH).

It belongs to the krueppel C2H2-type zinc-finger protein family. Widely expressed with highest levels in kidney, spleen and ovary.

It localises to the nucleus. Its function is as follows. May be involved in transcriptional regulation. This Danio rerio (Zebrafish) protein is Zinc finger protein 687a (znf687a).